The chain runs to 847 residues: Bifunctional protein argC, mitochondrial (847 aa).

The interval 100-331 (QIVLVKIGGG…PPSTSITITS (232 aa)) is acetylglutamate kinase. The region spanning 352-508 (GEVMHSHESP…CLSQSSTYLS (157 aa)) is the N-acetyltransferase domain. Residues 531 to 846 (FRVGLIGARG…LDELASIKNE (316 aa)) are N-acetyl-gamma-glutamyl-phosphate reductase. Cys-665 is an active-site residue.

It in the N-terminal section; belongs to the acetylglutamate kinase family. This sequence in the C-terminal section; belongs to the NAGSA dehydrogenase family.

It is found in the mitochondrion. The catalysed reaction is N-acetyl-L-glutamate 5-semialdehyde + phosphate + NADP(+) = N-acetyl-L-glutamyl 5-phosphate + NADPH + H(+). It catalyses the reaction N-acetyl-L-glutamate + ATP = N-acetyl-L-glutamyl 5-phosphate + ADP. The protein operates within amino-acid biosynthesis; L-arginine biosynthesis; N(2)-acetyl-L-ornithine from L-glutamate: step 2/4. It participates in amino-acid biosynthesis; L-arginine biosynthesis; N(2)-acetyl-L-ornithine from L-glutamate: step 3/4. The chain is Bifunctional protein argC, mitochondrial (argC) from Dictyostelium discoideum (Social amoeba).